Consider the following 302-residue polypeptide: Decaprenyl-phosphate phosphoribosyltransferase (302 aa).

5-phospho-alpha-D-ribose 1-diphosphate is bound at residue Lys28. A run of 2 helical transmembrane segments spans residues 30 to 50 and 55 to 75; these read VLVLAAPLAALGGGVRYDYVE and VSMAFVVFSLAASAVYLVNDV. Tyr70 contributes to the 5-phospho-alpha-D-ribose 1-diphosphate binding site. Residues Asn73 and Asp77 each coordinate Mg(2+). Residue Lys87 coordinates 5-phospho-alpha-D-ribose 1-diphosphate. 2 consecutive transmembrane segments (helical) span residues 100–120 and 122–142; these read WLAYTVAVVLGVTSLAGAWML and PNLALVMVVYLAMQLAYCFGL. 2 residues coordinate 5-phospho-alpha-D-ribose 1-diphosphate: Lys143 and Arg160. The next 2 membrane-spanning stretches (helical) occupy residues 146-166 and 170-190; these read AVVEICVVSSAYLIRAIAGGV and IPLSKWFLLIMAFGSLFMVAG. Trans,octa-cis-decaprenyl phosphate is bound at residue Lys191. The next 3 membrane-spanning stretches (helical) occupy residues 218-238, 244-264, and 282-302; these read LRFVWTLSATAVVLCYGLWAF, SGSWFAVSMIPFTIAILRYAV, and RVLQLLALAWIATVGAAVAFG.

Belongs to the UbiA prenyltransferase family. DPPR synthase subfamily. As to quaternary structure, homotrimer. The cofactor is Mg(2+).

Its subcellular location is the cell inner membrane. It catalyses the reaction trans,octa-cis-decaprenyl phosphate + 5-phospho-alpha-D-ribose 1-diphosphate + H(+) = trans,octa-cis-decaprenylphospho-beta-D-ribofuranose 5-phosphate + diphosphate. It functions in the pathway cell wall biogenesis; cell wall polysaccharide biosynthesis. Functionally, involved in the biosynthesis of decaprenylphosphoryl arabinose (DPA) a precursor for arabinan synthesis in mycobacterial cell wall biosynthesis. Catalyzes the transfer of a 5-phosphoribosyl residue from phosphoribose diphosphate (PRPP) to decaprenyl phosphate (DP) to form decaprenylphosphoryl-5-phosphoribose (DPPR). The polypeptide is Decaprenyl-phosphate phosphoribosyltransferase (Mycobacterium tuberculosis (strain CDC 1551 / Oshkosh)).